A 54-amino-acid chain; its full sequence is UPF0391 membrane protein Oant_1245 (54 aa).

2 consecutive transmembrane segments (helical) span residues 5-25 and 29-48; these read ALVF…GIAG and GIAQ…SLIA.

The protein belongs to the UPF0391 family.

The protein localises to the cell membrane. In Brucella anthropi (strain ATCC 49188 / DSM 6882 / CCUG 24695 / JCM 21032 / LMG 3331 / NBRC 15819 / NCTC 12168 / Alc 37) (Ochrobactrum anthropi), this protein is UPF0391 membrane protein Oant_1245.